Consider the following 1826-residue polypeptide: 1,3-beta-glucan synthase component bgs3 (1826 aa).

The span at 34–43 (QSNDQYNNIQ) shows a compositional bias: polar residues. Positions 34-90 (QSNDQYNNIQHPAPSFANPFIHEQDDSYSDILEEEPDEDAYDSPERPSSTEEFISQD) are disordered. Residues 59–75 (DSYSDILEEEPDEDAYD) are compositionally biased toward acidic residues. Helical transmembrane passes span 427 to 447 (IWIL…PTIY), 465 to 485 (WCAP…ALIL), 504 to 524 (LIFV…IFGF), 543 to 563 (FFFS…FLLG), 597 to 617 (AALW…FLTL), 637 to 657 (FMIG…LVYL), and 660 to 680 (LVLF…MFSI). Phosphoserine is present on S885. The next 11 membrane-spanning stretches (helical) occupy residues 1272–1292 (VFIM…GAMY), 1329–1349 (IISI…HDLL), 1375–1397 (VTQN…YIAT), 1417–1437 (GSSI…TMTV), 1438–1458 (WTTH…CPFI), 1531–1551 (IFTE…AYTF), 1571–1591 (IWIM…ILLM), 1607–1627 (YGAV…VFTF), 1642–1662 (VLGC…VVVF), 1701–1721 (CKVV…CILF), and 1770–1790 (SLLF…PLVL).

This sequence belongs to the glycosyltransferase 48 family. In terms of assembly, component of the 1,3-beta-glucan synthase (GS) complex, composed of at least the alternate catalytic subunits bgs1, bgs2, bgs3, and bgs4, and a regulatory subunit chr4.

The protein resides in the membrane. It catalyses the reaction [(1-&gt;3)-beta-D-glucosyl](n) + UDP-alpha-D-glucose = [(1-&gt;3)-beta-D-glucosyl](n+1) + UDP + H(+). Alternate catalytic subunit of the 1,3-beta-glucan synthase (GS) complex. Synthesizes 1,3-beta-glucan, a major structural component of the yeast cell wall. Required for cell wall biosynthesis and cell elongation. This is 1,3-beta-glucan synthase component bgs3 from Schizosaccharomyces pombe (strain 972 / ATCC 24843) (Fission yeast).